The following is a 67-amino-acid chain: Large ribosomal subunit protein bL35 (67 aa).

Positions 1–41 (MPKMKTHRGAAKRFKKTGTGKLKRSHAYTSHMFRHKSQKQK) are disordered.

This sequence belongs to the bacterial ribosomal protein bL35 family.

The polypeptide is Large ribosomal subunit protein bL35 (Shouchella clausii (strain KSM-K16) (Alkalihalobacillus clausii)).